Here is a 409-residue protein sequence, read N- to C-terminus: tRNA(Met) cytidine acetate ligase (409 aa).

Residues 7 to 20 (VVEYNPMHNGHLYH), Gly102, Asn169, and Arg194 each bind ATP.

Belongs to the TmcAL family.

The protein localises to the cytoplasm. The enzyme catalyses cytidine(34) in elongator tRNA(Met) + acetate + ATP = N(4)-acetylcytidine(34) in elongator tRNA(Met) + AMP + diphosphate. Functionally, catalyzes the formation of N(4)-acetylcytidine (ac(4)C) at the wobble position of elongator tRNA(Met), using acetate and ATP as substrates. First activates an acetate ion to form acetyladenylate (Ac-AMP) and then transfers the acetyl group to tRNA to form ac(4)C34. This Clostridium botulinum (strain ATCC 19397 / Type A) protein is tRNA(Met) cytidine acetate ligase.